Consider the following 575-residue polypeptide: Flagellin B (575 aa).

Belongs to the bacterial flagellin family. In terms of assembly, heteromer of flaA and flaB.

The protein resides in the secreted. Its subcellular location is the bacterial flagellum. Functionally, flagellin is the subunit protein which polymerizes to form the filaments of bacterial flagella. This Campylobacter jejuni protein is Flagellin B (flaB).